Consider the following 545-residue polypeptide: Glucose-6-phosphate isomerase (545 aa).

The active-site Proton donor is E351. Residues H382 and K510 contribute to the active site.

Belongs to the GPI family.

It is found in the cytoplasm. It carries out the reaction alpha-D-glucose 6-phosphate = beta-D-fructose 6-phosphate. Its pathway is carbohydrate biosynthesis; gluconeogenesis. It functions in the pathway carbohydrate degradation; glycolysis; D-glyceraldehyde 3-phosphate and glycerone phosphate from D-glucose: step 2/4. Functionally, catalyzes the reversible isomerization of glucose-6-phosphate to fructose-6-phosphate. This is Glucose-6-phosphate isomerase from Shewanella loihica (strain ATCC BAA-1088 / PV-4).